We begin with the raw amino-acid sequence, 480 residues long: Aspartyl/glutamyl-tRNA(Asn/Gln) amidotransferase subunit B (480 aa).

It belongs to the GatB/GatE family. GatB subfamily. In terms of assembly, heterotrimer of A, B and C subunits.

The enzyme catalyses L-glutamyl-tRNA(Gln) + L-glutamine + ATP + H2O = L-glutaminyl-tRNA(Gln) + L-glutamate + ADP + phosphate + H(+). It carries out the reaction L-aspartyl-tRNA(Asn) + L-glutamine + ATP + H2O = L-asparaginyl-tRNA(Asn) + L-glutamate + ADP + phosphate + 2 H(+). Allows the formation of correctly charged Asn-tRNA(Asn) or Gln-tRNA(Gln) through the transamidation of misacylated Asp-tRNA(Asn) or Glu-tRNA(Gln) in organisms which lack either or both of asparaginyl-tRNA or glutaminyl-tRNA synthetases. The reaction takes place in the presence of glutamine and ATP through an activated phospho-Asp-tRNA(Asn) or phospho-Glu-tRNA(Gln). In Streptococcus pneumoniae (strain Hungary19A-6), this protein is Aspartyl/glutamyl-tRNA(Asn/Gln) amidotransferase subunit B.